Here is a 358-residue protein sequence, read N- to C-terminus: Histidinol-phosphate aminotransferase (358 aa).

K218 is subject to N6-(pyridoxal phosphate)lysine.

It belongs to the class-II pyridoxal-phosphate-dependent aminotransferase family. Histidinol-phosphate aminotransferase subfamily. In terms of assembly, homodimer. It depends on pyridoxal 5'-phosphate as a cofactor.

It catalyses the reaction L-histidinol phosphate + 2-oxoglutarate = 3-(imidazol-4-yl)-2-oxopropyl phosphate + L-glutamate. The protein operates within amino-acid biosynthesis; L-histidine biosynthesis; L-histidine from 5-phospho-alpha-D-ribose 1-diphosphate: step 7/9. This Dehalococcoides mccartyi (strain ATCC BAA-2100 / JCM 16839 / KCTC 5957 / BAV1) protein is Histidinol-phosphate aminotransferase.